A 223-amino-acid polypeptide reads, in one-letter code: Ribosomal RNA small subunit methyltransferase G (223 aa).

S-adenosyl-L-methionine contacts are provided by residues glycine 90, leucine 95, 141-142 (VE), and arginine 156.

It belongs to the methyltransferase superfamily. RNA methyltransferase RsmG family.

The protein resides in the cytoplasm. The enzyme catalyses guanosine(527) in 16S rRNA + S-adenosyl-L-methionine = N(7)-methylguanosine(527) in 16S rRNA + S-adenosyl-L-homocysteine. Specifically methylates the N7 position of guanine in position 527 of 16S rRNA. The protein is Ribosomal RNA small subunit methyltransferase G of Ralstonia nicotianae (strain ATCC BAA-1114 / GMI1000) (Ralstonia solanacearum).